Reading from the N-terminus, the 67-residue chain is UPF0337 protein msl9551 (67 aa).

It belongs to the UPF0337 (CsbD) family.

This is UPF0337 protein msl9551 from Mesorhizobium japonicum (strain LMG 29417 / CECT 9101 / MAFF 303099) (Mesorhizobium loti (strain MAFF 303099)).